We begin with the raw amino-acid sequence, 85 residues long: MGSVVAILRVMPESPDIDLEKLKKALKDALPGIKDIQEEPIGFGLKALKLAAIVNDAGGETDALEGKLNAVPGVERAEIIEVTLN.

The protein belongs to the EF-1-beta/EF-1-delta family.

Functionally, promotes the exchange of GDP for GTP in EF-1-alpha/GDP, thus allowing the regeneration of EF-1-alpha/GTP that could then be used to form the ternary complex EF-1-alpha/GTP/AAtRNA. The polypeptide is Elongation factor 1-beta (Methanoregula boonei (strain DSM 21154 / JCM 14090 / 6A8)).